Consider the following 282-residue polypeptide: MTNLPKVTVRDLAESGVHFGHKISRWNAKIAPYIYGVHQENRIHIIDLRKTLPLLQVAMKVLYDVAFQGGRILFVGTKFQAFDIIASEAIRCGQYYVNHRWLGGMLTNWGTVSSSIKTLMQYEKILNDEDSILTKKELGNIEKKKQKLDKALGGIREMGAIPDILFIIDTNKEHIAVKEAKKLGIPIVAILDTNSDPDGITYLIPGNDDSRKSIELYCKLATDSILAGIESSLAKSGVKIDDIRGDEFIQEKEDGIVQTKRRRSKVYKEEEREVVTNEDESR.

The disordered stretch occupies residues 260–282 (KRRRSKVYKEEEREVVTNEDESR). Basic and acidic residues predominate over residues 266 to 282 (VYKEEEREVVTNEDESR).

Belongs to the universal ribosomal protein uS2 family.

The sequence is that of Small ribosomal subunit protein uS2 from Wolbachia sp. subsp. Drosophila simulans (strain wRi).